Reading from the N-terminus, the 119-residue chain is Phenol 2-monooxygenase, oxygenase component DmpO (119 aa).

In terms of assembly, the multicomponent enzyme phenol hydroxylase is formed by DmpL (P1 component), DmpM (P2 component), DmpN (P3 component), DmpO (P4 component) and DmpP (P5 component). The oxygenase component is a dimer composed of three subunits, DmpL, DmpN and DmpO (DmpLNO).

It catalyses the reaction phenol + NADH + O2 + H(+) = catechol + NAD(+) + H2O. The protein operates within aromatic compound metabolism; phenol degradation. Its activity is regulated as follows. Requires DmpM for efficient turnover. The activity of DmpLNO oxygenase is inhibited by dithiothreitol (DTT) by a mechanism apparently involving H(2)O(2) generation. Its function is as follows. Part of a multicomponent enzyme which catalyzes the degradation of phenol and some of its methylated derivatives. DmpL, DmpN and DmpO form the oxygenase component of the complex. Required for growth on phenol and for in vitro phenol hydroxylase activity. The polypeptide is Phenol 2-monooxygenase, oxygenase component DmpO (Pseudomonas sp. (strain CF600)).